A 164-amino-acid polypeptide reads, in one-letter code: Cyclic pyranopterin monophosphate synthase (164 aa).

Substrate is bound by residues 75 to 77 (MCH) and 116 to 117 (ME). The active site involves D131.

Belongs to the MoaC family. Homohexamer; trimer of dimers.

The catalysed reaction is (8S)-3',8-cyclo-7,8-dihydroguanosine 5'-triphosphate = cyclic pyranopterin phosphate + diphosphate. It functions in the pathway cofactor biosynthesis; molybdopterin biosynthesis. Its function is as follows. Catalyzes the conversion of (8S)-3',8-cyclo-7,8-dihydroguanosine 5'-triphosphate to cyclic pyranopterin monophosphate (cPMP). In Staphylococcus aureus (strain bovine RF122 / ET3-1), this protein is Cyclic pyranopterin monophosphate synthase.